The sequence spans 247 residues: Proteasome subunit alpha type-7-B (247 aa).

It belongs to the peptidase T1A family. As to quaternary structure, the 26S proteasome consists of a 20S proteasome core and two 19S regulatory subunits. The 20S proteasome core is composed of 28 subunits that are arranged in four stacked rings, resulting in a barrel-shaped structure. The two end rings are each formed by seven alpha subunits, and the two central rings are each formed by seven beta subunits. The catalytic chamber with the active sites is on the inside of the barrel. Phosphorylated in G2 phase.

It is found in the cytoplasm. Its subcellular location is the nucleus. Its function is as follows. The proteasome is a multicatalytic proteinase complex which is characterized by its ability to cleave peptides with Arg, Phe, Tyr, Leu, and Glu adjacent to the leaving group at neutral or slightly basic pH. The proteasome has an ATP-dependent proteolytic activity. This Xenopus laevis (African clawed frog) protein is Proteasome subunit alpha type-7-B (psma7-b).